Reading from the N-terminus, the 410-residue chain is Arginine biosynthesis bifunctional protein ArgJ (410 aa).

Positions 160, 186, 197, 283, 405, and 410 each coordinate substrate. Threonine 197 serves as the catalytic Nucleophile.

Belongs to the ArgJ family. In terms of assembly, heterotetramer of two alpha and two beta chains.

The protein resides in the cytoplasm. The catalysed reaction is N(2)-acetyl-L-ornithine + L-glutamate = N-acetyl-L-glutamate + L-ornithine. It carries out the reaction L-glutamate + acetyl-CoA = N-acetyl-L-glutamate + CoA + H(+). Its pathway is amino-acid biosynthesis; L-arginine biosynthesis; L-ornithine and N-acetyl-L-glutamate from L-glutamate and N(2)-acetyl-L-ornithine (cyclic): step 1/1. It functions in the pathway amino-acid biosynthesis; L-arginine biosynthesis; N(2)-acetyl-L-ornithine from L-glutamate: step 1/4. Catalyzes two activities which are involved in the cyclic version of arginine biosynthesis: the synthesis of N-acetylglutamate from glutamate and acetyl-CoA as the acetyl donor, and of ornithine by transacetylation between N(2)-acetylornithine and glutamate. This is Arginine biosynthesis bifunctional protein ArgJ from Geobacillus kaustophilus (strain HTA426).